The sequence spans 145 residues: Spanin, inner membrane subunit (145 aa).

Over 1 to 3 (MSR) the chain is Cytoplasmic. A helical; Signal-anchor for type II membrane protein membrane pass occupies residues 4–24 (IKAIIASVIICIIVCLSWAVN). Topologically, residues 25–145 (HYRDNAITYK…QEYIRSQCLK (121 aa)) are periplasmic.

This sequence belongs to the Lambdavirus i-spanin family. In terms of assembly, homodimer; disulfide-linked. Interacts (via C-terminus) with the spanin outer lipoprotein subunit (via C-terminus). Part of the spanin complex which spans the entire periplasmic space. The spanin complex is composed of one homodimer of the i-spanin linked by intermolecular disulfide bonds involving two Cys residues and one homodimer of the o-spanin covalently linked by an intermolecular disulfide bond involving one Cys.

The protein resides in the host cell inner membrane. In terms of biological role, component of the spanin complex that disrupts the host outer membrane and participates in cell lysis during virus exit. The spanin complex conducts the final step in host lysis by disrupting the outer membrane after holin and endolysin action have permeabilized the inner membrane and degraded the host peptidoglycans. Host outer membrane disruption is due to local fusion between the inner and outer membrane performed by the spanin complex. The chain is Spanin, inner membrane subunit (15) from Salmonella typhimurium (Bacteriophage P22).